We begin with the raw amino-acid sequence, 199 residues long: Putative peroxiredoxin ycf42 (199 aa).

In terms of domain architecture, Thioredoxin spans 8-165 (LRVGQLAPDF…TLRVLQAIQY (158 aa)). Catalysis depends on Cys-53, which acts as the Cysteine sulfenic acid (-SOH) intermediate.

Belongs to the peroxiredoxin family. AhpC/Prx1 subfamily. As to quaternary structure, homodimer; disulfide-linked, upon oxidation. The Cys-53-SH group is the primary site of oxidation by H(2)O(2), and the oxidized Cys-53 (probably Cys-SOH) rapidly reacts with Cys-174-SH of the other subunit to form an intermolecular disulfide. This disulfide is subsequently reduced by thioredoxin.

It is found in the plastid. It localises to the chloroplast. The enzyme catalyses a hydroperoxide + [thioredoxin]-dithiol = an alcohol + [thioredoxin]-disulfide + H2O. Thiol-specific peroxidase that catalyzes the reduction of hydrogen peroxide and organic hydroperoxides to water and alcohols, respectively. Plays a role in cell protection against oxidative stress by detoxifying peroxides. The protein is Putative peroxiredoxin ycf42 (ycf42) of Pyropia yezoensis (Susabi-nori).